Reading from the N-terminus, the 229-residue chain is Cytidylate kinase (229 aa).

12 to 20 (GPSGSGKGT) provides a ligand contact to ATP.

Belongs to the cytidylate kinase family. Type 1 subfamily.

It localises to the cytoplasm. The enzyme catalyses CMP + ATP = CDP + ADP. It carries out the reaction dCMP + ATP = dCDP + ADP. In Pseudomonas fluorescens (strain Pf0-1), this protein is Cytidylate kinase.